The sequence spans 118 residues: UPF0295 protein GWCH70_0499 (118 aa).

A run of 2 helical transmembrane segments spans residues Ile12–Phe32 and Leu42–Gly62.

This sequence belongs to the UPF0295 family.

Its subcellular location is the cell membrane. This is UPF0295 protein GWCH70_0499 from Geobacillus sp. (strain WCH70).